Here is a 116-residue protein sequence, read N- to C-terminus: U11-theraphotoxin-Hhn1b (116 aa).

The N-terminal stretch at 1-21 (MNTVRVAFLLVFVLAVSLGQA) is a signal peptide. Positions 22 to 74 (DKDENRMEMQEKTEQGKSYLDFAENLLLQKLEELEAKLLEEDSEESRNSRQKR) are excised as a propeptide. Positions 61 to 83 (EEDSEESRNSRQKRCIGEGVPCD) are disordered. 3 cysteine pairs are disulfide-bonded: Cys75/Cys90, Cys82/Cys95, and Cys89/Cys110.

Belongs to the neurotoxin 14 (magi-1) family. 01 (HNTX-16) subfamily. Expressed by the venom gland.

It is found in the secreted. Probable ion channel inhibitor. The chain is U11-theraphotoxin-Hhn1b from Cyriopagopus hainanus (Chinese bird spider).